Here is a 205-residue protein sequence, read N- to C-terminus: Small ribosomal subunit protein uS4 (205 aa).

Residues 1 to 16 are compositionally biased toward basic and acidic residues; it reads MSKRESSKYKIDRRMG. A disordered region spans residues 1-46; the sequence is MSKRESSKYKIDRRMGENIWGRPKSPVNRREYGPGQHGQRRKSKLS. One can recognise an S4 RNA-binding domain in the interval 94-157; sequence SRLDAIVYRA…KQLVSVLESV (64 aa).

It belongs to the universal ribosomal protein uS4 family. As to quaternary structure, part of the 30S ribosomal subunit. Contacts protein S5. The interaction surface between S4 and S5 is involved in control of translational fidelity.

In terms of biological role, one of the primary rRNA binding proteins, it binds directly to 16S rRNA where it nucleates assembly of the body of the 30S subunit. Its function is as follows. With S5 and S12 plays an important role in translational accuracy. This is Small ribosomal subunit protein uS4 from Sinorhizobium fredii (strain NBRC 101917 / NGR234).